The chain runs to 441 residues: Protein arginine methyltransferase NDUFAF7, mitochondrial (441 aa).

A mitochondrion-targeting transit peptide spans M1–H46. The segment at G415 to G434 is disordered. Residues H418–P427 are compositionally biased toward polar residues.

This sequence belongs to the NDUFAF7 family. Interacts with NDUFS2.

The protein resides in the mitochondrion. It catalyses the reaction L-arginyl-[protein] + 2 S-adenosyl-L-methionine = N(omega),N(omega)'-dimethyl-L-arginyl-[protein] + 2 S-adenosyl-L-homocysteine + 2 H(+). Arginine methyltransferase involved in the assembly or stability of mitochondrial NADH:ubiquinone oxidoreductase complex (complex I). Acts by mediating symmetric dimethylation of 'Arg-118' of NDUFS2 after it assembles into the complex I, stabilizing the early intermediate complex. The polypeptide is Protein arginine methyltransferase NDUFAF7, mitochondrial (Bos taurus (Bovine)).